We begin with the raw amino-acid sequence, 459 residues long: Argininosuccinate lyase (459 aa).

Belongs to the lyase 1 family. Argininosuccinate lyase subfamily.

It localises to the cytoplasm. It carries out the reaction 2-(N(omega)-L-arginino)succinate = fumarate + L-arginine. It functions in the pathway amino-acid biosynthesis; L-arginine biosynthesis; L-arginine from L-ornithine and carbamoyl phosphate: step 3/3. The chain is Argininosuccinate lyase from Bacillus licheniformis (strain ATCC 14580 / DSM 13 / JCM 2505 / CCUG 7422 / NBRC 12200 / NCIMB 9375 / NCTC 10341 / NRRL NRS-1264 / Gibson 46).